We begin with the raw amino-acid sequence, 130 residues long: Large ribosomal subunit protein bL20 (130 aa).

It belongs to the bacterial ribosomal protein bL20 family.

In terms of biological role, binds directly to 23S ribosomal RNA and is necessary for the in vitro assembly process of the 50S ribosomal subunit. It is not involved in the protein synthesizing functions of that subunit. The chain is Large ribosomal subunit protein bL20 from Solibacter usitatus (strain Ellin6076).